The chain runs to 29 residues: Sarcolamban B (29 aa).

The helical transmembrane segment at 7–27 (LFTTFLILAFLLFLLYAFYEA) threads the bilayer.

In terms of assembly, interacts with SERCA. Strongly expressed in embryonic and larval somatic muscles and postembryonic heart.

It localises to the sarcoplasmic reticulum membrane. In terms of biological role, plays an essential role in the regulation of calcium transport at the sarcoplasmic reticulum (SR), which is secondarily required for regular muscle contraction. The polypeptide is Sarcolamban B (Drosophila melanogaster (Fruit fly)).